We begin with the raw amino-acid sequence, 160 residues long: Transcriptional repressor NrdR (160 aa).

The segment at 3–34 is a zinc-finger region; sequence CPYCQYEDTQVKDSRPSEEGTVIRRRRICSVC. Residues 49-139 enclose the ATP-cone domain; it reads LLVLKKSGRY…VYRDFRNASD (91 aa).

This sequence belongs to the NrdR family. Requires Zn(2+) as cofactor.

Negatively regulates transcription of bacterial ribonucleotide reductase nrd genes and operons by binding to NrdR-boxes. The protein is Transcriptional repressor NrdR of Bartonella henselae (strain ATCC 49882 / DSM 28221 / CCUG 30454 / Houston 1) (Rochalimaea henselae).